A 278-amino-acid chain; its full sequence is Cytoplasmic envelopment protein 1 (278 aa).

This sequence belongs to the herpesviridae cytoplasmic envelopment protein 1 family. Interacts with BSRF1 tegument protein; the BBRF2-BSRF1 complexes oligomerize and might play a role in tethering the viral nucleocapsids to the host Golgi membrane during secondary envelopment.

It localises to the virion. It is found in the virion tegument. Its subcellular location is the host cytoplasm. The protein localises to the host Golgi apparatus. In terms of biological role, plays a critical role in cytoplasmic virus egress. Participates in the final step of tegumentation and envelope acquisition within the host cytoplasm. The protein is Cytoplasmic envelopment protein 1 of Homo sapiens (Human).